The following is a 274-amino-acid chain: Nitrogenase iron protein (274 aa).

An ATP-binding site is contributed by 8-15; that stretch reads GKGGIGKS. Cys-94 contributes to the [4Fe-4S] cluster binding site. Position 97 is an ADP-ribosylarginine; by dinitrogenase reductase ADP-ribosyltransferase (Arg-97). Residue Cys-131 coordinates [4Fe-4S] cluster.

It belongs to the NifH/BchL/ChlL family. Homodimer. [4Fe-4S] cluster is required as a cofactor. Post-translationally, the reversible ADP-ribosylation of Arg-97 inactivates the nitrogenase reductase and regulates nitrogenase activity.

The enzyme catalyses N2 + 8 reduced [2Fe-2S]-[ferredoxin] + 16 ATP + 16 H2O = H2 + 8 oxidized [2Fe-2S]-[ferredoxin] + 2 NH4(+) + 16 ADP + 16 phosphate + 6 H(+). The key enzymatic reactions in nitrogen fixation are catalyzed by the nitrogenase complex, which has 2 components: the iron protein and the molybdenum-iron protein. This is Nitrogenase iron protein from Solidesulfovibrio magneticus (strain ATCC 700980 / DSM 13731 / RS-1) (Desulfovibrio magneticus).